Here is a 645-residue protein sequence, read N- to C-terminus: UPF0313 protein CLK_3381 (645 aa).

The region spanning 295–566 (AIKEVKFSIT…RMQRALLQFS (272 aa)) is the Radical SAM core domain. [4Fe-4S] cluster contacts are provided by cysteine 309, cysteine 313, and cysteine 316. Residues 598 to 645 (NKPYKKSHKKNNVKNNNNHYNKNNNYNKNKDVSKKNKKNSLSKHKKRK) form a disordered region. Over residues 600–609 (PYKKSHKKNN) the composition is skewed to basic residues. Over residues 610 to 624 (VKNNNNHYNKNNNYN) the composition is skewed to low complexity. Over residues 632 to 645 (KNKKNSLSKHKKRK) the composition is skewed to basic residues.

It belongs to the UPF0313 family. Requires [4Fe-4S] cluster as cofactor.

This Clostridium botulinum (strain Loch Maree / Type A3) protein is UPF0313 protein CLK_3381.